Reading from the N-terminus, the 226-residue chain is Pyridoxal 5'-phosphate synthase subunit PdxT (226 aa).

60–62 (GES) is an L-glutamine binding site. The active-site Nucleophile is the C92. L-glutamine is bound by residues R121 and 150–151 (IR). Catalysis depends on charge relay system residues H191 and E193.

The protein belongs to the glutaminase PdxT/SNO family. In the presence of PdxS, forms a dodecamer of heterodimers. Only shows activity in the heterodimer.

The catalysed reaction is aldehydo-D-ribose 5-phosphate + D-glyceraldehyde 3-phosphate + L-glutamine = pyridoxal 5'-phosphate + L-glutamate + phosphate + 3 H2O + H(+). It carries out the reaction L-glutamine + H2O = L-glutamate + NH4(+). It functions in the pathway cofactor biosynthesis; pyridoxal 5'-phosphate biosynthesis. Its function is as follows. Catalyzes the hydrolysis of glutamine to glutamate and ammonia as part of the biosynthesis of pyridoxal 5'-phosphate. The resulting ammonia molecule is channeled to the active site of PdxS. The polypeptide is Pyridoxal 5'-phosphate synthase subunit PdxT (Nocardia farcinica (strain IFM 10152)).